The chain runs to 808 residues: Spindle assembly abnormal protein 4 (808 aa).

The tract at residues 1–151 is disordered; the sequence is MASDENIGAD…PDEPSTLVNS (151 aa). A compositionally biased stretch (low complexity) spans 42–54; it reads PPTSELSSASSPS. 2 stretches are compositionally biased toward polar residues: residues 61–78 and 85–104; these read SLSN…SGIS and PPTT…SPEN. The segment covering 113-123 has biased composition (basic and acidic residues); it reads AEEHGHSGQHA. Acidic residues predominate over residues 124-133; the sequence is EEEEDNDTDE. A coiled-coil region spans residues 161-181; the sequence is KYKNAAAEFKAFERRMDSMRS. 2 disordered regions span residues 187–206 and 271–298; these read TSLA…PPTR and VTAP…DENR. Residues 280 to 294 show a composition bias toward polar residues; the sequence is MMNSSRQNPQNGNVQ. The stretch at 314–503 forms a coiled coil; it reads LDRQKLEIEI…ERDDKEKEMF (190 aa). The segment covering 511–529 has biased composition (polar residues); the sequence is KTSNPVPPVLNQSVPISIT. The disordered stretch occupies residues 511-564; it reads KTSNPVPPVLNQSVPISITSNGPSRHPSSSSLTTFRKPSTSNRERGVSWADEPN. Positions 530–541 are enriched in low complexity; sequence SNGPSRHPSSSS. Polar residues predominate over residues 542–551; that stretch reads LTTFRKPSTS.

As to quaternary structure, interacts with hyls-1; leading to hyls-1 localization into newly forming centrioles.

Its subcellular location is the cytoplasm. It is found in the cytoskeleton. The protein resides in the microtubule organizing center. The protein localises to the centrosome. Its function is as follows. Required for centrosome duplication. Plays a central role in determining centrosome size. This Caenorhabditis elegans protein is Spindle assembly abnormal protein 4 (sas-4).